We begin with the raw amino-acid sequence, 194 residues long: Holliday junction branch migration complex subunit RuvA (194 aa).

Residues 1–64 (MIGRLRGILA…EDSVSLYGFL (64 aa)) form a domain I region. Residues 65–140 (REGERRLFRD…RAADFSSGAP (76 aa)) form a domain II region. The segment at 140-144 (PITGQ) is flexible linker. The tract at residues 145 to 194 (LGPDAVSEATVALQQLGYKPAEAARMAREAGAEGDEVATVIRKALQAALR) is domain III.

Belongs to the RuvA family. In terms of assembly, homotetramer. Forms an RuvA(8)-RuvB(12)-Holliday junction (HJ) complex. HJ DNA is sandwiched between 2 RuvA tetramers; dsDNA enters through RuvA and exits via RuvB. An RuvB hexamer assembles on each DNA strand where it exits the tetramer. Each RuvB hexamer is contacted by two RuvA subunits (via domain III) on 2 adjacent RuvB subunits; this complex drives branch migration. In the full resolvosome a probable DNA-RuvA(4)-RuvB(12)-RuvC(2) complex forms which resolves the HJ.

The protein resides in the cytoplasm. In terms of biological role, the RuvA-RuvB-RuvC complex processes Holliday junction (HJ) DNA during genetic recombination and DNA repair, while the RuvA-RuvB complex plays an important role in the rescue of blocked DNA replication forks via replication fork reversal (RFR). RuvA specifically binds to HJ cruciform DNA, conferring on it an open structure. The RuvB hexamer acts as an ATP-dependent pump, pulling dsDNA into and through the RuvAB complex. HJ branch migration allows RuvC to scan DNA until it finds its consensus sequence, where it cleaves and resolves the cruciform DNA. In Xanthomonas campestris pv. campestris (strain 8004), this protein is Holliday junction branch migration complex subunit RuvA.